The primary structure comprises 71 residues: Palustrin-Ca (71 aa).

Positions 1-22 (MFTLKKSLLLLFFLGTISLSLC) are cleaved as a signal peptide. A propeptide spanning residues 23–40 (EQERDADGDEGEVEEVKR) is cleaved from the precursor. Residues cysteine 63 and cysteine 69 are joined by a disulfide bond.

It belongs to the frog skin active peptide (FSAP) family. Brevinin subfamily. Expressed by the skin glands.

The protein resides in the secreted. Its subcellular location is the target cell membrane. Its function is as follows. Antibacterial peptide with amphipathic alpha-helical structure that exhibits potent broad-spectrum activity against Gram-positive and -negative bacteria. It is active against Listeria ATCC 54004 (MIC=30 ug/ml), S.aureus ATCC 25923 (MIC=7.8 ug/ml), S.suis 2 CVCC 606 (MIC=31.25 ug/ml), B.subtilis ADB403 (30 ug/ml), K.pneumoniae ATCC 700603 (MIC=60 ug/ml) and P.aeruginosa ATCC 227853 (MIC=30 ug/ml). Does not show activity against Salmonella ATCC 20020 and the fungus Candida albicans. Is also cytotoxic to HeLa cells at high concentrations. In addition, shows a strong antitumor activity but only a little hemolytic activity. Despite the presence of a Gly residue at position 10, this alpha-helical peptide remains relatively rigid, not exhibiting any significant flexibility during the molecular dynamics simulation. The peptide shows a preference for a position parallel to the target membrane that suggests it exerts its antimicrobial activity through a non-pore-forming mechanism of action, such as the carpet model or the interfacial activity model. This Aquarana catesbeiana (American bullfrog) protein is Palustrin-Ca.